Reading from the N-terminus, the 388-residue chain is Galactokinase (388 aa).

Glu33–Asp36 is a substrate binding site. ATP contacts are provided by residues Ser67 and Gly124 to Ser130. Positions 130 and 162 each coordinate Mg(2+). The Proton acceptor role is filled by Asp174. Position 224 (Tyr224) interacts with substrate.

It belongs to the GHMP kinase family. GalK subfamily.

Its subcellular location is the cytoplasm. It catalyses the reaction alpha-D-galactose + ATP = alpha-D-galactose 1-phosphate + ADP + H(+). It functions in the pathway carbohydrate metabolism; galactose metabolism. Its function is as follows. Catalyzes the transfer of the gamma-phosphate of ATP to D-galactose to form alpha-D-galactose-1-phosphate (Gal-1-P). This Lacticaseibacillus paracasei (strain ATCC 334 / BCRC 17002 / CCUG 31169 / CIP 107868 / KCTC 3260 / NRRL B-441) (Lactobacillus paracasei) protein is Galactokinase.